Reading from the N-terminus, the 101-residue chain is Small ribosomal subunit protein uS10 (101 aa).

Belongs to the universal ribosomal protein uS10 family. In terms of assembly, part of the 30S ribosomal subunit.

Functionally, involved in the binding of tRNA to the ribosomes. In Mycobacterium bovis (strain ATCC BAA-935 / AF2122/97), this protein is Small ribosomal subunit protein uS10.